We begin with the raw amino-acid sequence, 382 residues long: Na(+)/H(+) antiporter NhaA 2 (382 aa).

11 consecutive transmembrane segments (helical) span residues 8-28 (FFSS…AAII), 49-69 (LSVE…MVGL), 87-107 (ALPG…YVWF), 115-135 (LAGW…VLAL), 146-166 (IFLS…IALF), 169-189 (SNIS…LFIM), 209-229 (FFML…ALFI), 252-272 (WVTF…ALSG), 286-306 (VALG…LLAV), 325-345 (VSVL…LAFA), and 353-373 (EVKV…MLIL).

It belongs to the NhaA Na(+)/H(+) (TC 2.A.33) antiporter family.

The protein resides in the cell inner membrane. The enzyme catalyses Na(+)(in) + 2 H(+)(out) = Na(+)(out) + 2 H(+)(in). In terms of biological role, na(+)/H(+) antiporter that extrudes sodium in exchange for external protons. The polypeptide is Na(+)/H(+) antiporter NhaA 2 (Klebsiella pneumoniae subsp. pneumoniae (strain ATCC 700721 / MGH 78578)).